The sequence spans 64 residues: Prokaryotic ubiquitin-like protein Pup (64 aa).

Residues 1 to 37 (MAQEQTKRGGGGGEDDDLTGSTAAGQERREKLTDETD) are disordered. The tract at residues 21-58 (STAAGQERREKLTDETDDLLDEIDDVLEENAEDFVRAY) is ARC ATPase binding. Positions 23-52 (AAGQERREKLTDETDDLLDEIDDVLEENAE) form a coiled coil. Residue Gln64 is modified to Deamidated glutamine. An Isoglutamyl lysine isopeptide (Gln-Lys) (interchain with K-? in acceptor proteins) cross-link involves residue Gln64.

The protein belongs to the prokaryotic ubiquitin-like protein family. In terms of assembly, strongly interacts with the proteasome-associated ATPase ARC through a hydrophobic interface; the interacting region of Pup lies in its C-terminal half. There is one Pup binding site per ARC hexamer ring. In terms of processing, is modified by deamidation of its C-terminal glutamine to glutamate by the deamidase Dop, a prerequisite to the subsequent pupylation process.

It participates in protein degradation; proteasomal Pup-dependent pathway. Its function is as follows. Protein modifier that is covalently attached to lysine residues of substrate proteins, thereby targeting them for proteasomal degradation. The tagging system is termed pupylation. In Mycolicibacterium vanbaalenii (strain DSM 7251 / JCM 13017 / BCRC 16820 / KCTC 9966 / NRRL B-24157 / PYR-1) (Mycobacterium vanbaalenii), this protein is Prokaryotic ubiquitin-like protein Pup.